Consider the following 187-residue polypeptide: Elongation factor P (187 aa).

This sequence belongs to the elongation factor P family.

The protein resides in the cytoplasm. It functions in the pathway protein biosynthesis; polypeptide chain elongation. Its function is as follows. Involved in peptide bond synthesis. Stimulates efficient translation and peptide-bond synthesis on native or reconstituted 70S ribosomes in vitro. Probably functions indirectly by altering the affinity of the ribosome for aminoacyl-tRNA, thus increasing their reactivity as acceptors for peptidyl transferase. This chain is Elongation factor P (efp), found in Helicobacter pylori (strain J99 / ATCC 700824) (Campylobacter pylori J99).